Here is a 294-residue protein sequence, read N- to C-terminus: Protein CHLOROPLAST J-LIKE DOMAIN 1, chloroplastic (294 aa).

Residues 1–58 (MAPALSTSCSSVMAFSTSNALRYHHPQISLRNSLRAPKSPSFVRLPLGKVLQSRIVIR) constitute a chloroplast transit peptide. Over 59 to 164 (AASSAAGNPQ…GPRFSRSSKN (106 aa)) the chain is Stromal. The interval 74 to 152 (NPYEVLGVNP…IKYADKQPII (79 aa)) is J-like domain. Residues 165–182 (DMLINLAISVVFSAWIAI) traverse the membrane as a helical segment. Residues 183 to 233 (KRNVEYKPLQFMSFVFVYRIFEKLKSFEAPSSPIYNEEGEESGRGLRMGKR) lie on the Chloroplast intermembrane side of the membrane. Residues 234 to 256 (LLRSLSLVFGSILLASLAYTGFL) traverse the membrane as a helical segment. Over 257–275 (NGIEYMGYSIPMVLYNNQE) the chain is Stromal. Residues 276–293 (LIVTASSAFMLYVIASFY) form a helical membrane-spanning segment. Arg294 is a topological domain (chloroplast intermembrane).

In terms of assembly, interacts (via J-like domain) with ARC6 (via J domain).

It is found in the plastid. The protein resides in the chloroplast inner membrane. In terms of biological role, probably involved in the regulation of the fatty acid metabolic process in chloroplasts, especially chloroplastic galactolipids monogalactosyldiacylglycerol (MGDG) and digalactosyldiacylglycerol (DGDG). This Arabidopsis thaliana (Mouse-ear cress) protein is Protein CHLOROPLAST J-LIKE DOMAIN 1, chloroplastic.